The chain runs to 418 residues: Glutamyl-tRNA(Gln) amidotransferase subunit D (418 aa).

Residues 74–405 form the Asparaginase/glutaminase domain; it reads KNISILSTGG…KEAKELMSKN (332 aa). Catalysis depends on residues threonine 84, threonine 160, aspartate 161, and lysine 237.

This sequence belongs to the asparaginase 1 family. GatD subfamily. As to quaternary structure, heterodimer of GatD and GatE.

The enzyme catalyses L-glutamyl-tRNA(Gln) + L-glutamine + ATP + H2O = L-glutaminyl-tRNA(Gln) + L-glutamate + ADP + phosphate + H(+). Allows the formation of correctly charged Gln-tRNA(Gln) through the transamidation of misacylated Glu-tRNA(Gln) in organisms which lack glutaminyl-tRNA synthetase. The reaction takes place in the presence of glutamine and ATP through an activated gamma-phospho-Glu-tRNA(Gln). The GatDE system is specific for glutamate and does not act on aspartate. The polypeptide is Glutamyl-tRNA(Gln) amidotransferase subunit D (Methanococcus maripaludis (strain DSM 14266 / JCM 13030 / NBRC 101832 / S2 / LL)).